A 112-amino-acid chain; its full sequence is Large ribosomal subunit protein uL22 (112 aa).

It belongs to the universal ribosomal protein uL22 family. In terms of assembly, part of the 50S ribosomal subunit.

This protein binds specifically to 23S rRNA; its binding is stimulated by other ribosomal proteins, e.g. L4, L17, and L20. It is important during the early stages of 50S assembly. It makes multiple contacts with different domains of the 23S rRNA in the assembled 50S subunit and ribosome. Functionally, the globular domain of the protein is located near the polypeptide exit tunnel on the outside of the subunit, while an extended beta-hairpin is found that lines the wall of the exit tunnel in the center of the 70S ribosome. The protein is Large ribosomal subunit protein uL22 of Sulfurovum sp. (strain NBC37-1).